The chain runs to 340 residues: tRNA N6-adenosine threonylcarbamoyltransferase (340 aa).

The Fe cation site is built by H113 and H117. Substrate contacts are provided by residues 135-139 (LVSGG), D169, G182, D186, and N274. A Fe cation-binding site is contributed by D302.

Belongs to the KAE1 / TsaD family. Requires Fe(2+) as cofactor.

It localises to the cytoplasm. The enzyme catalyses L-threonylcarbamoyladenylate + adenosine(37) in tRNA = N(6)-L-threonylcarbamoyladenosine(37) in tRNA + AMP + H(+). Its function is as follows. Required for the formation of a threonylcarbamoyl group on adenosine at position 37 (t(6)A37) in tRNAs that read codons beginning with adenine. Is involved in the transfer of the threonylcarbamoyl moiety of threonylcarbamoyl-AMP (TC-AMP) to the N6 group of A37, together with TsaE and TsaB. TsaD likely plays a direct catalytic role in this reaction. In Mycolicibacterium vanbaalenii (strain DSM 7251 / JCM 13017 / BCRC 16820 / KCTC 9966 / NRRL B-24157 / PYR-1) (Mycobacterium vanbaalenii), this protein is tRNA N6-adenosine threonylcarbamoyltransferase.